The following is a 316-amino-acid chain: Beta-ketoacyl-[acyl-carrier-protein] synthase III 1 (316 aa).

Catalysis depends on residues Cys112 and His243. Residues 244–248 are ACP-binding; it reads QANYR. Asn273 is a catalytic residue.

Belongs to the thiolase-like superfamily. FabH family. Homodimer.

It localises to the cytoplasm. The enzyme catalyses malonyl-[ACP] + acetyl-CoA + H(+) = 3-oxobutanoyl-[ACP] + CO2 + CoA. It participates in lipid metabolism; fatty acid biosynthesis. Catalyzes the condensation reaction of fatty acid synthesis by the addition to an acyl acceptor of two carbons from malonyl-ACP. Catalyzes the first condensation reaction which initiates fatty acid synthesis and may therefore play a role in governing the total rate of fatty acid production. Possesses both acetoacetyl-ACP synthase and acetyl transacylase activities. Its substrate specificity determines the biosynthesis of branched-chain and/or straight-chain of fatty acids. The polypeptide is Beta-ketoacyl-[acyl-carrier-protein] synthase III 1 (Vibrio vulnificus (strain CMCP6)).